Consider the following 250-residue polypeptide: Flavin-dependent thymidylate synthase (250 aa).

The 227-residue stretch at leucine 7–threonine 233 folds into the ThyX domain. FAD is bound by residues serine 71, arginine 95–arginine 97, and glutamine 103. DUMP contacts are provided by residues glutamate 92–arginine 95, glutamine 103–arginine 107, and arginine 172. Positions arginine 95–serine 105 match the ThyX motif motif. Residues asparagine 188 to arginine 190 and histidine 194 contribute to the FAD site. A dUMP-binding site is contributed by arginine 199. The active-site Involved in ionization of N3 of dUMP, leading to its activation is the arginine 199.

This sequence belongs to the thymidylate synthase ThyX family. In terms of assembly, homotetramer. The cofactor is FAD.

It carries out the reaction dUMP + (6R)-5,10-methylene-5,6,7,8-tetrahydrofolate + NADPH + H(+) = dTMP + (6S)-5,6,7,8-tetrahydrofolate + NADP(+). Its pathway is pyrimidine metabolism; dTTP biosynthesis. Its function is as follows. Catalyzes the reductive methylation of 2'-deoxyuridine-5'-monophosphate (dUMP) to 2'-deoxythymidine-5'-monophosphate (dTMP) while utilizing 5,10-methylenetetrahydrofolate (mTHF) as the methyl donor, and NADPH and FADH(2) as the reductant. This is Flavin-dependent thymidylate synthase from Mycobacterium bovis (strain ATCC BAA-935 / AF2122/97).